Reading from the N-terminus, the 440-residue chain is Branched-chain amino acid permease BrnQ (440 aa).

Helical transmembrane passes span Y9–F29, A46–S66, P80–I100, S121–L141, I149–A169, G196–L216, L227–T247, I284–A304, I321–I341, L348–F368, S378–I398, and I414–I434.

This sequence belongs to the branched chain amino acid transporter family.

The protein resides in the cell membrane. In terms of biological role, branched-chain amino acid transport system which is involved in the uptake of isoleucine and valine. Probably does not transport leucine. Together with BcaP and BraB, plays an important role in the activation of CodY, a branched-chain amino acid-responsive transcriptional regulator that controls the expression of several dozen transcription units in B.subtilis. This is Branched-chain amino acid permease BrnQ from Bacillus subtilis (strain 168).